The following is a 268-amino-acid chain: Mesoderm posterior protein 1 (268 aa).

The tract at residues 17-93 (AAWGPTRRPP…RQSASEREKL (77 aa)) is disordered. Polar residues predominate over residues 36–48 (LVSSPDSWGSTPA). Positions 66-86 (APSVGRRGARSSRLGSGQRQS) are enriched in low complexity. The region spanning 82-136 (GQRQSASEREKLRMRTLARALHELRRFLPPSVAPAGQSLTKIETLRLAIRYIGHL) is the bHLH domain. A CPLCP motif is present at residues 163-167 (CPLCP). 2 consecutive repeat copies span residues 182-183 (GQ) and 184-185 (GQ). The segment at 182 to 185 (GQGQ) is 2 X 2 AA tandem repeats of G-Q.

The protein localises to the nucleus. Its function is as follows. Transcription factor. Plays a role in the epithelialization of somitic mesoderm and in the development of cardiac mesoderm. Defines the rostrocaudal patterning of the somites by participating in distinct Notch pathways. This is Mesoderm posterior protein 1 (MESP1) from Homo sapiens (Human).